A 218-amino-acid polypeptide reads, in one-letter code: Small ribosomal subunit protein uS3c (218 aa).

In terms of domain architecture, KH type-2 spans Ile39–Ala118.

It belongs to the universal ribosomal protein uS3 family. As to quaternary structure, part of the 30S ribosomal subunit.

The protein localises to the plastid. Its subcellular location is the chloroplast. This Ipomoea purpurea (Common morning glory) protein is Small ribosomal subunit protein uS3c (rps3).